The following is an 89-amino-acid chain: Small ribosomal subunit protein uS15 (89 aa).

Over residues 1 to 11 (MSITAERKAEV) the composition is skewed to basic and acidic residues. Residues 1–25 (MSITAERKAEVIKTNARKSGDTGSP) form a disordered region.

The protein belongs to the universal ribosomal protein uS15 family. As to quaternary structure, part of the 30S ribosomal subunit. Forms a bridge to the 50S subunit in the 70S ribosome, contacting the 23S rRNA.

Functionally, one of the primary rRNA binding proteins, it binds directly to 16S rRNA where it helps nucleate assembly of the platform of the 30S subunit by binding and bridging several RNA helices of the 16S rRNA. In terms of biological role, forms an intersubunit bridge (bridge B4) with the 23S rRNA of the 50S subunit in the ribosome. This Nitrobacter hamburgensis (strain DSM 10229 / NCIMB 13809 / X14) protein is Small ribosomal subunit protein uS15.